The sequence spans 380 residues: Cytochrome b (380 aa).

The next 4 helical transmembrane spans lie at 34–54 (FGSL…LLAM), 78–99 (WLIR…YFHI), 114–134 (WNTG…GYVL), and 179–199 (FFAL…IHLT). 2 residues coordinate heme b: histidine 84 and histidine 98. Positions 183 and 197 each coordinate heme b. Histidine 202 contributes to the a ubiquinone binding site. Transmembrane regions (helical) follow at residues 227–247 (LKDI…ALFS), 289–309 (LGGV…PFLH), 321–341 (ISQL…WVGS), and 348–368 (FIII…VLFP).

It belongs to the cytochrome b family. The cytochrome bc1 complex contains 11 subunits: 3 respiratory subunits (MT-CYB, CYC1 and UQCRFS1), 2 core proteins (UQCRC1 and UQCRC2) and 6 low-molecular weight proteins (UQCRH/QCR6, UQCRB/QCR7, UQCRQ/QCR8, UQCR10/QCR9, UQCR11/QCR10 and a cleavage product of UQCRFS1). This cytochrome bc1 complex then forms a dimer. Requires heme b as cofactor.

Its subcellular location is the mitochondrion inner membrane. In terms of biological role, component of the ubiquinol-cytochrome c reductase complex (complex III or cytochrome b-c1 complex) that is part of the mitochondrial respiratory chain. The b-c1 complex mediates electron transfer from ubiquinol to cytochrome c. Contributes to the generation of a proton gradient across the mitochondrial membrane that is then used for ATP synthesis. The protein is Cytochrome b (MT-CYB) of Pachyptila turtur (Fairy prion).